Reading from the N-terminus, the 504-residue chain is ATP synthase subunit alpha (504 aa).

169–176 (GDRQTGKT) serves as a coordination point for ATP.

Belongs to the ATPase alpha/beta chains family. F-type ATPases have 2 components, CF(1) - the catalytic core - and CF(0) - the membrane proton channel. CF(1) has five subunits: alpha(3), beta(3), gamma(1), delta(1), epsilon(1). CF(0) has three main subunits: a(1), b(2) and c(9-12). The alpha and beta chains form an alternating ring which encloses part of the gamma chain. CF(1) is attached to CF(0) by a central stalk formed by the gamma and epsilon chains, while a peripheral stalk is formed by the delta and b chains.

It is found in the cell membrane. It carries out the reaction ATP + H2O + 4 H(+)(in) = ADP + phosphate + 5 H(+)(out). Functionally, produces ATP from ADP in the presence of a proton gradient across the membrane. The alpha chain is a regulatory subunit. The sequence is that of ATP synthase subunit alpha from Clostridium botulinum (strain Loch Maree / Type A3).